We begin with the raw amino-acid sequence, 154 residues long: Protein SprT-like (154 aa).

The region spanning 6 to 144 (LQQLTETISL…CGTCHGKLKF (139 aa)) is the SprT-like domain. H67 is a Zn(2+) binding site. E68 is a catalytic residue. Residue H71 coordinates Zn(2+).

This sequence belongs to the SprT family. Zn(2+) serves as cofactor.

It is found in the cytoplasm. This Shouchella clausii (strain KSM-K16) (Alkalihalobacillus clausii) protein is Protein SprT-like.